The following is a 393-amino-acid chain: Sugar efflux transporter B (393 aa).

Transmembrane regions (helical) follow at residues 13–33, 52–72, 84–101, 105–124, 152–172, 174–194, 219–239, 253–273, 283–303, 308–328, 344–364, and 366–386; these read FDLT…AGAL, MVGF…QFLA, LIVF…LFAW, YFIL…TANP, VSLA…GFSF, VMYL…WFFL, LLLF…IINM, LAGV…LIAG, LLMC…LLAH, LLGL…IGML, LYTN…GIAA, and IWNY…TMFC.

The protein belongs to the major facilitator superfamily. Set transporter family.

The protein resides in the cell inner membrane. In terms of biological role, involved in the efflux of sugars. The physiological role may be the detoxification of non-metabolizable sugar analogs. Can transport lactose and glucose. In Salmonella typhimurium (strain LT2 / SGSC1412 / ATCC 700720), this protein is Sugar efflux transporter B (setB).